A 545-amino-acid polypeptide reads, in one-letter code: Membrane protein insertase YidC (545 aa).

Helical transmembrane passes span 350–370 (IIGNWGWAIIVLTIIVKAVLY), 424–444 (LPMLLQIPVFIGLYWALFASV), 461–481 (ADPYYILPIIMAATMFAQTYL), and 498–518 (PLVFSVMFFFFPAGLVLYWVI).

This sequence belongs to the OXA1/ALB3/YidC family. Type 1 subfamily. Interacts with the Sec translocase complex via SecD. Specifically interacts with transmembrane segments of nascent integral membrane proteins during membrane integration.

The protein localises to the cell inner membrane. In terms of biological role, required for the insertion and/or proper folding and/or complex formation of integral membrane proteins into the membrane. Involved in integration of membrane proteins that insert both dependently and independently of the Sec translocase complex, as well as at least some lipoproteins. Aids folding of multispanning membrane proteins. In Neisseria meningitidis serogroup A / serotype 4A (strain DSM 15465 / Z2491), this protein is Membrane protein insertase YidC.